We begin with the raw amino-acid sequence, 141 residues long: 6,7-dimethyl-8-ribityllumazine synthase (141 aa).

Residues Phe-14, 46-48 (VFD), and 70-72 (CVI) contribute to the 5-amino-6-(D-ribitylamino)uracil site. Position 75 to 76 (75 to 76 (ET)) interacts with (2S)-2-hydroxy-3-oxobutyl phosphate. His-78 functions as the Proton donor in the catalytic mechanism. Leu-103 lines the 5-amino-6-(D-ribitylamino)uracil pocket. Arg-118 provides a ligand contact to (2S)-2-hydroxy-3-oxobutyl phosphate.

In terms of assembly, forms an icosahedral capsid composed of 60 subunits, arranged as a dodecamer of pentamers.

The enzyme catalyses (2S)-2-hydroxy-3-oxobutyl phosphate + 5-amino-6-(D-ribitylamino)uracil = 6,7-dimethyl-8-(1-D-ribityl)lumazine + phosphate + 2 H2O + H(+). It functions in the pathway cofactor biosynthesis; riboflavin biosynthesis; riboflavin from 2-hydroxy-3-oxobutyl phosphate and 5-amino-6-(D-ribitylamino)uracil: step 1/2. Functionally, catalyzes the formation of 6,7-dimethyl-8-ribityllumazine by condensation of 5-amino-6-(D-ribitylamino)uracil with 3,4-dihydroxy-2-butanone 4-phosphate. This is the penultimate step in the biosynthesis of riboflavin. The protein is 6,7-dimethyl-8-ribityllumazine synthase (ribH) of Methanocaldococcus jannaschii (strain ATCC 43067 / DSM 2661 / JAL-1 / JCM 10045 / NBRC 100440) (Methanococcus jannaschii).